The primary structure comprises 355 residues: 3-dehydroquinate synthase (355 aa).

NAD(+) contacts are provided by residues 71–76 (EGEASK), 105–109 (GVVGD), 129–130 (TS), Lys-142, and Lys-151. Zn(2+) is bound by residues Glu-184, His-246, and His-263.

The protein belongs to the sugar phosphate cyclases superfamily. Dehydroquinate synthase family. It depends on Co(2+) as a cofactor. Requires Zn(2+) as cofactor. NAD(+) is required as a cofactor.

The protein resides in the cytoplasm. It catalyses the reaction 7-phospho-2-dehydro-3-deoxy-D-arabino-heptonate = 3-dehydroquinate + phosphate. Its pathway is metabolic intermediate biosynthesis; chorismate biosynthesis; chorismate from D-erythrose 4-phosphate and phosphoenolpyruvate: step 2/7. Functionally, catalyzes the conversion of 3-deoxy-D-arabino-heptulosonate 7-phosphate (DAHP) to dehydroquinate (DHQ). This chain is 3-dehydroquinate synthase, found in Streptococcus sanguinis (strain SK36).